A 426-amino-acid polypeptide reads, in one-letter code: 3-phosphoshikimate 1-carboxyvinyltransferase (426 aa).

Positions 22, 23, and 27 each coordinate 3-phosphoshikimate. A phosphoenolpyruvate-binding site is contributed by lysine 22. Positions 96 and 124 each coordinate phosphoenolpyruvate. Residues serine 170, serine 171, glutamine 172, serine 198, aspartate 314, asparagine 337, and lysine 341 each coordinate 3-phosphoshikimate. Glutamine 172 contributes to the phosphoenolpyruvate binding site. Aspartate 314 acts as the Proton acceptor in catalysis. Phosphoenolpyruvate contacts are provided by arginine 345, arginine 387, and lysine 412.

This sequence belongs to the EPSP synthase family. In terms of assembly, monomer.

The protein resides in the cytoplasm. It carries out the reaction 3-phosphoshikimate + phosphoenolpyruvate = 5-O-(1-carboxyvinyl)-3-phosphoshikimate + phosphate. Its pathway is metabolic intermediate biosynthesis; chorismate biosynthesis; chorismate from D-erythrose 4-phosphate and phosphoenolpyruvate: step 6/7. In terms of biological role, catalyzes the transfer of the enolpyruvyl moiety of phosphoenolpyruvate (PEP) to the 5-hydroxyl of shikimate-3-phosphate (S3P) to produce enolpyruvyl shikimate-3-phosphate and inorganic phosphate. The chain is 3-phosphoshikimate 1-carboxyvinyltransferase from Shewanella sp. (strain MR-7).